Here is a 185-residue protein sequence, read N- to C-terminus: Photosystem I assembly protein Ycf4 (185 aa).

A run of 2 helical transmembrane segments spans residues 21–43 (NFFW…ASSY) and 63–85 (GVVM…CTIL).

The protein belongs to the Ycf4 family.

The protein localises to the plastid. Its subcellular location is the chloroplast thylakoid membrane. Its function is as follows. Seems to be required for the assembly of the photosystem I complex. The sequence is that of Photosystem I assembly protein Ycf4 from Saccharum hybrid (Sugarcane).